The chain runs to 466 residues: Glutamate--tRNA ligase 1 (466 aa).

Positions 9-19 (PSPTGMLHIGG) match the 'HIGH' region motif. A 'KMSKS' region motif is present at residues 238–242 (KLSKR). Lys-241 is an ATP binding site.

This sequence belongs to the class-I aminoacyl-tRNA synthetase family. Glutamate--tRNA ligase type 1 subfamily. In terms of assembly, monomer.

Its subcellular location is the cytoplasm. It carries out the reaction tRNA(Glu) + L-glutamate + ATP = L-glutamyl-tRNA(Glu) + AMP + diphosphate. Its function is as follows. Catalyzes the attachment of glutamate to tRNA(Glu) in a two-step reaction: glutamate is first activated by ATP to form Glu-AMP and then transferred to the acceptor end of tRNA(Glu). The sequence is that of Glutamate--tRNA ligase 1 from Acidiphilium cryptum (strain JF-5).